The following is a 483-amino-acid chain: tRNA-2-methylthio-N(6)-dimethylallyladenosine synthase (483 aa).

One can recognise an MTTase N-terminal domain in the interval 31–148 (KKLYIETQGC…LPQMLDQHHA (118 aa)). Cys40, Cys77, Cys111, Cys192, Cys196, and Cys199 together coordinate [4Fe-4S] cluster. The Radical SAM core domain maps to 178–410 (RVEGFKAFVS…QQVIKQSSIE (233 aa)). A TRAM domain is found at 413–477 (DAMLGKIERV…LNLVYGELLN (65 aa)).

This sequence belongs to the methylthiotransferase family. MiaB subfamily. In terms of assembly, monomer. It depends on [4Fe-4S] cluster as a cofactor.

It is found in the cytoplasm. The enzyme catalyses N(6)-dimethylallyladenosine(37) in tRNA + (sulfur carrier)-SH + AH2 + 2 S-adenosyl-L-methionine = 2-methylsulfanyl-N(6)-dimethylallyladenosine(37) in tRNA + (sulfur carrier)-H + 5'-deoxyadenosine + L-methionine + A + S-adenosyl-L-homocysteine + 2 H(+). Functionally, catalyzes the methylthiolation of N6-(dimethylallyl)adenosine (i(6)A), leading to the formation of 2-methylthio-N6-(dimethylallyl)adenosine (ms(2)i(6)A) at position 37 in tRNAs that read codons beginning with uridine. In Acinetobacter baumannii (strain ACICU), this protein is tRNA-2-methylthio-N(6)-dimethylallyladenosine synthase.